Reading from the N-terminus, the 542-residue chain is Membrane protein insertase YidC (542 aa).

The helical transmembrane segment at 6–26 threads the bilayer; that stretch reads NILLIGLLFVSFLLWQQWQAD. A compositionally biased stretch (polar residues) spans 32–41; that stretch reads VAQTQSSVAP. The segment at 32–57 is disordered; sequence VAQTQSSVAPSTVADAHSSDVPDADS. Helical transmembrane passes span 326–346, 350–370, 421–441, 458–478, and 501–521; these read LVVDYGFLWWLAIPIHWLLMF, FVGNWGVAIILITLTVRGMLY, GGCLPILLQMPIFIALYWVLL, LSVQDPYYVMPILMGVSMFIM, and VIFTVFFLWFPAGLVLYWLVG.

It belongs to the OXA1/ALB3/YidC family. Type 1 subfamily. As to quaternary structure, interacts with the Sec translocase complex via SecD. Specifically interacts with transmembrane segments of nascent integral membrane proteins during membrane integration.

It localises to the cell inner membrane. Functionally, required for the insertion and/or proper folding and/or complex formation of integral membrane proteins into the membrane. Involved in integration of membrane proteins that insert both dependently and independently of the Sec translocase complex, as well as at least some lipoproteins. Aids folding of multispanning membrane proteins. The protein is Membrane protein insertase YidC of Shewanella piezotolerans (strain WP3 / JCM 13877).